Here is a 478-residue protein sequence, read N- to C-terminus: Muscarinic acetylcholine receptor M4 (478 aa).

Residues 1–30 lie on the Extracellular side of the membrane; that stretch reads MXNFTPVNGSSANQSVRLVTAAHNHLETVE. Asn-8 and Asn-13 each carry an N-linked (GlcNAc...) asparagine glycan. The helical transmembrane segment at 31-53 threads the bilayer; that stretch reads MVFIATVTGSLSLVTVVGNILVM. The Cytoplasmic segment spans residues 54-67; the sequence is LSIKVNRQLQTVNN. A helical membrane pass occupies residues 68–88; it reads YFLFSLGCADLIIGAFSMNLY. The Extracellular segment spans residues 89 to 105; sequence TLYIIKGYWPLGAVVCD. Cysteines 104 and 184 form a disulfide. A helical membrane pass occupies residues 106–127; sequence LWLALDYVVSNASVMNLLIISF. Residues 128–147 lie on the Cytoplasmic side of the membrane; sequence DRYFCVTKPLTYPARRTTKM. Residues 148-170 form a helical membrane-spanning segment; it reads AGLMIAAAWVLSFVLWAPAILFW. Over 171 to 192 the chain is Extracellular; the sequence is QFVVGKRTVPDNQCFIQFLSNP. A helical transmembrane segment spans residues 193–215; it reads AVTFGTAIAAFYLPVVIMTVLYI. Residues 216–400 lie on the Cytoplasmic side of the membrane; sequence HISLASRSRV…AARERKVTRT (185 aa). The tract at residues 271 to 333 is disordered; the sequence is LEEAPPPALP…APTLQPRTLN (63 aa). Positions 274–285 are enriched in pro residues; it reads APPPALPPPPRP. Residues 293–303 are compositionally biased toward polar residues; the sequence is NESSSGSATQN. Residues 310 to 332 are compositionally biased toward low complexity; sequence TELSTAEATTPALPAPTLQPRTL. Residues 401 to 421 form a helical membrane-spanning segment; the sequence is IFAILLAFILTWTPYNVMVLV. Over 422–435 the chain is Extracellular; it reads NTFCQSCIPERVWS. A helical membrane pass occupies residues 436–455; it reads IGYWLCYVNSTINPACYALC. Residues 456–478 are Cytoplasmic-facing; it reads NATFKKTFRHLLLCQYRNIGTAR. Thr-458, Thr-462, and Thr-476 each carry phosphothreonine.

This sequence belongs to the G-protein coupled receptor 1 family. Muscarinic acetylcholine receptor subfamily. CHRM4 sub-subfamily.

It is found in the cell membrane. Its subcellular location is the postsynaptic cell membrane. The muscarinic acetylcholine receptor mediates various cellular responses, including inhibition of adenylate cyclase, breakdown of phosphoinositides and modulation of potassium channels through the action of G proteins. Primary transducing effect is inhibition of adenylate cyclase. The sequence is that of Muscarinic acetylcholine receptor M4 (Chrm4) from Rattus norvegicus (Rat).